Consider the following 102-residue polypeptide: Urease subunit beta (102 aa).

The protein belongs to the urease beta subunit family. Heterotrimer of UreA (gamma), UreB (beta) and UreC (alpha) subunits. Three heterotrimers associate to form the active enzyme.

It is found in the cytoplasm. It catalyses the reaction urea + 2 H2O + H(+) = hydrogencarbonate + 2 NH4(+). It participates in nitrogen metabolism; urea degradation; CO(2) and NH(3) from urea (urease route): step 1/1. This is Urease subunit beta from Clostridium perfringens.